The primary structure comprises 1166 residues: DEAD-box ATP-dependent RNA helicase 42 (1166 aa).

Basic and acidic residues-rich tracts occupy residues 1 to 12 (MEVEKSKYRSED) and 21 to 45 (DLKK…EKRR). The tract at residues 1 to 460 (MEVEKSKYRS…NDDDPSLDED (460 aa)) is disordered. Residues 14 to 95 (DVVEEEADLK…KDRVKRRSER (82 aa)) are a coiled coil. Acidic residues predominate over residues 59–70 (SEDDYDRDDDEE). Residues 80–95 (ERRRRDKDRVKRRSER) are compositionally biased toward basic residues. Residues 101-110 (SEDDVEEEDE) show a composition bias toward acidic residues. Residues 111-206 (RDKRRVNEKE…RERERSREVG (96 aa)) are compositionally biased toward basic and acidic residues. Residues 130 to 302 (RGKDRKRDRE…KRKKEEAESE (173 aa)) are a coiled coil. A Phosphoserine modification is found at Ser210. Over residues 224-314 (EGGERKEKER…GDADGNEPKA (91 aa)) the composition is skewed to basic and acidic residues. Ser324 carries the post-translational modification Phosphoserine. Basic and acidic residues-rich tracts occupy residues 344 to 357 (ETKP…KMVD) and 416 to 426 (MNGKESGDRPK). Residues 529-557 (KFWHQTGLTSKILDTMKKLNYEKPMPIQT) carry the Q motif motif. A Helicase ATP-binding domain is found at 560–738 (LPIIMSGRDC…RKVLNKPVEI (179 aa)). An ATP-binding site is contributed by 573–580 (AKTGSGKT). Positions 686 to 689 (DEAD) match the DEAD box motif. One can recognise a Helicase C-terminal domain in the interval 749–910 (DITQLVEVRP…PVPDDLKALA (162 aa)).

The protein belongs to the DEAD box helicase family. DDX46/PRP5 subfamily.

Its subcellular location is the nucleus. The catalysed reaction is ATP + H2O = ADP + phosphate + H(+). Helicase required for pre-mRNA splicing, cold-responsive gene regulation and cold tolerance. The chain is DEAD-box ATP-dependent RNA helicase 42 (RH42) from Arabidopsis thaliana (Mouse-ear cress).